A 327-amino-acid polypeptide reads, in one-letter code: Alkanal monooxygenase beta chain (327 aa).

This sequence belongs to the bacterial luciferase oxidoreductase family. Heterodimer of an alpha and a beta chain.

It carries out the reaction a long-chain fatty aldehyde + FMNH2 + O2 = a long-chain fatty acid + hnu + FMN + H2O + 2 H(+). Functionally, light-emitting reaction in luminous bacteria. The specific role of the beta subunit is unknown, but it is absolutely required for bioluminescence activity. This chain is Alkanal monooxygenase beta chain (luxB), found in Photorhabdus luminescens (Xenorhabdus luminescens).